The primary structure comprises 339 residues: Glyceraldehyde-3-phosphate dehydrogenase (339 aa).

NAD(+) is bound by residues 12-13, Asp35, and Lys84; that span reads RI. D-glyceraldehyde 3-phosphate contacts are provided by residues 155–157, Thr186, 215–216, and Arg238; these read SCT and TG. The active-site Nucleophile is Cys156. Residue Asn320 participates in NAD(+) binding.

Belongs to the glyceraldehyde-3-phosphate dehydrogenase family. As to quaternary structure, homotetramer.

The protein resides in the cytoplasm. The catalysed reaction is D-glyceraldehyde 3-phosphate + phosphate + NAD(+) = (2R)-3-phospho-glyceroyl phosphate + NADH + H(+). Its pathway is carbohydrate degradation; glycolysis; pyruvate from D-glyceraldehyde 3-phosphate: step 1/5. In Mastigamoeba balamuthi (Phreatamoeba balamuthi), this protein is Glyceraldehyde-3-phosphate dehydrogenase (GAPD).